A 214-amino-acid chain; its full sequence is Large ribosomal subunit protein uL16-like (214 aa).

This sequence belongs to the universal ribosomal protein uL16 family. As to quaternary structure, component of the 60S large ribosomal subunit (LSU).

It localises to the cytoplasm. Functionally, testis-specific component of the ribosome, which is required for the transition from prophase to metaphase in male meiosis I. Compensates for the inactivated X-linked RPL10 paralog during spermatogenesis. The ribosome is a large ribonucleoprotein complex responsible for the synthesis of proteins in the cell. The small ribosomal subunit (SSU) binds messenger RNAs (mRNAs) and translates the encoded message by selecting cognate aminoacyl-transfer RNA (tRNA) molecules. The large subunit (LSU) contains the ribosomal catalytic site termed the peptidyl transferase center (PTC), which catalyzes the formation of peptide bonds, thereby polymerizing the amino acids delivered by tRNAs into a polypeptide chain. The nascent polypeptides leave the ribosome through a tunnel in the LSU and interact with protein factors that function in enzymatic processing, targeting, and the membrane insertion of nascent chains at the exit of the ribosomal tunnel. The sequence is that of Large ribosomal subunit protein uL16-like (RPL10L) from Bos taurus (Bovine).